The primary structure comprises 543 residues: Probable protein kinase UbiB (543 aa).

The Protein kinase domain occupies 123-501; the sequence is DFDSQALASA…GSRQGRARYL (379 aa). Residues 129 to 137 and lysine 152 each bind ATP; that span reads LASASIAQV. The active-site Proton acceptor is aspartate 287. A helical membrane pass occupies residues 517 to 537; it reads MVNIALWPIGLYVAGGVIWLA.

Belongs to the ABC1 family. UbiB subfamily.

The protein localises to the cell inner membrane. It functions in the pathway cofactor biosynthesis; ubiquinone biosynthesis [regulation]. Its function is as follows. Is probably a protein kinase regulator of UbiI activity which is involved in aerobic coenzyme Q (ubiquinone) biosynthesis. In Edwardsiella ictaluri (strain 93-146), this protein is Probable protein kinase UbiB.